We begin with the raw amino-acid sequence, 501 residues long: Cytochrome P450 2J5 (501 aa).

Cys447 serves as a coordination point for heme.

Belongs to the cytochrome P450 family. Heme serves as cofactor.

It is found in the endoplasmic reticulum membrane. It localises to the microsome membrane. The enzyme catalyses an organic molecule + reduced [NADPH--hemoprotein reductase] + O2 = an alcohol + oxidized [NADPH--hemoprotein reductase] + H2O + H(+). The protein is Cytochrome P450 2J5 (Cyp2j5) of Mus musculus (Mouse).